The chain runs to 330 residues: DNA-directed RNA polymerase subunit alpha (330 aa).

Positions Met1–Ser229 are alpha N-terminal domain (alpha-NTD). The segment at Ala245–His330 is alpha C-terminal domain (alpha-CTD).

The protein belongs to the RNA polymerase alpha chain family. Homodimer. The RNAP catalytic core consists of 2 alpha, 1 beta, 1 beta' and 1 omega subunit. When a sigma factor is associated with the core the holoenzyme is formed, which can initiate transcription.

It carries out the reaction RNA(n) + a ribonucleoside 5'-triphosphate = RNA(n+1) + diphosphate. Its function is as follows. DNA-dependent RNA polymerase catalyzes the transcription of DNA into RNA using the four ribonucleoside triphosphates as substrates. In Aster yellows witches'-broom phytoplasma (strain AYWB), this protein is DNA-directed RNA polymerase subunit alpha.